A 728-amino-acid polypeptide reads, in one-letter code: Catalase-peroxidase 1 (728 aa).

The segment at residues 91-218 (WHSAGTYRTA…LAAVQMGLIY (128 aa)) is a cross-link (tryptophyl-tyrosyl-methioninium (Trp-Tyr) (with M-244)). H92 acts as the Proton acceptor in catalysis. The segment at residues 218–244 (YVNPEGPDGNPDPVAAARDIRDTFARM) is a cross-link (tryptophyl-tyrosyl-methioninium (Tyr-Met) (with W-91)). Position 259 (H259) interacts with heme b.

Belongs to the peroxidase family. Peroxidase/catalase subfamily. In terms of assembly, homodimer or homotetramer. The cofactor is heme b. In terms of processing, formation of the three residue Trp-Tyr-Met cross-link is important for the catalase, but not the peroxidase activity of the enzyme.

It catalyses the reaction H2O2 + AH2 = A + 2 H2O. The enzyme catalyses 2 H2O2 = O2 + 2 H2O. Its function is as follows. Bifunctional enzyme with both catalase and broad-spectrum peroxidase activity. This is Catalase-peroxidase 1 from Burkholderia ambifaria (strain MC40-6).